Consider the following 77-residue polypeptide: Large ribosomal subunit protein bL31 (77 aa).

Zn(2+) contacts are provided by C16, C18, C37, and C40.

The protein belongs to the bacterial ribosomal protein bL31 family. Type A subfamily. As to quaternary structure, part of the 50S ribosomal subunit. Zn(2+) is required as a cofactor.

Binds the 23S rRNA. This is Large ribosomal subunit protein bL31 from Pseudomonas fluorescens (strain SBW25).